The chain runs to 376 residues: Glutamate 5-kinase (376 aa).

ATP is bound at residue Lys17. Substrate-binding residues include Ser56, Asp144, and Asn156. Residues Thr176–Asp177 and Thr218–Lys224 contribute to the ATP site. The region spanning Lys283 to Lys359 is the PUA domain.

Belongs to the glutamate 5-kinase family.

It is found in the cytoplasm. The catalysed reaction is L-glutamate + ATP = L-glutamyl 5-phosphate + ADP. The protein operates within amino-acid biosynthesis; L-proline biosynthesis; L-glutamate 5-semialdehyde from L-glutamate: step 1/2. Its function is as follows. Catalyzes the transfer of a phosphate group to glutamate to form L-glutamate 5-phosphate. The polypeptide is Glutamate 5-kinase (Desulfotalea psychrophila (strain LSv54 / DSM 12343)).